Consider the following 226-residue polypeptide: Protein transport protein sec20 (226 aa).

Residues 1–189 lie on the Cytoplasmic side of the membrane; it reads MADVLNALEE…IKSLKLSDRS (189 aa). The stretch at 53–75 forms a coiled coil; the sequence is LRYEKAVQEYIRLNRRYRNKIAS. A Phosphoserine modification is found at Ser97. The chain crosses the membrane as a helical; Anchor for type IV membrane protein span at residues 190–210; that stretch reads DYFLVVSGFGFFIFVVVYLLF. Topologically, residues 211-226 are lumenal; it reads KRIVWPILSMFLWFLR.

This sequence belongs to the SEC20 family. As to quaternary structure, component of a SNARE complex consisting of ufe1, sec20, sec22 and use1. Interacts with tip20 through its cytoplasmic domain.

It localises to the endoplasmic reticulum membrane. SNARE required for targeting and fusion of Golgi-derived retrograde transport vesicles with the ER. The chain is Protein transport protein sec20 from Schizosaccharomyces pombe (strain 972 / ATCC 24843) (Fission yeast).